The sequence spans 1046 residues: UDP-N-acetylglucosamine--peptide N-acetylglucosaminyltransferase 110 kDa subunit (1046 aa).

Alanine 2 carries the N-acetylalanine modification. 2 positions are modified to phosphoserine; by GSK3-beta; alternate: serine 3 and serine 4. O-linked (GlcNAc) serine; alternate glycans are attached at residues serine 3 and serine 4. Aspartate 10 is a glycosylation site (O-linked (GlcNAc) serine). Threonine 12 is a glycosylation site (O-linked (GlcNAc) threonine). Residue methionine 18 is glycosylated (O-linked (GlcNAc) serine). Serine 20 is modified (phosphoserine). The TPR 1 repeat unit spans residues phenylalanine 21 to asparagine 54. Glutamate 38 carries an O-linked (GlcNAc) threonine glycan. O-linked (GlcNAc) serine glycosylation is found at proline 52 and glycine 56. TPR repeat units lie at residues alanine 89–phenylalanine 122, isoleucine 123–leucine 156, tyrosine 157–phenylalanine 190, alanine 191–phenylalanine 224, leucine 225–histidine 258, alanine 259–phenylalanine 292, proline 293–histidine 326, alanine 327–phenylalanine 360, alanine 361–phenylalanine 394, alanine 395–phenylalanine 428, and alanine 429–phenylalanine 462. An O-linked (GlcNAc) serine; by autocatalysis glycan is attached at serine 399. Phosphothreonine; by AMPK is present on threonine 454. The TPR 13; truncated repeat unit spans residues proline 463–leucine 473. Positions aspartate 464–tyrosine 466 match the DFP motif motif. A Nuclear localization signal motif is present at residues lysine 487–proline 503. Histidine 508 (proton acceptor) is an active-site residue. UDP contacts are provided by residues glutamine 849, lysine 852, alanine 906 to lysine 908, histidine 911 to arginine 914, histidine 930 to threonine 932, and aspartate 935. Position 989 is a phosphotyrosine (tyrosine 989). A required for phosphatidylinositol 3,4,5-triphosphate binding region spans residues lysine 991–lysine 1010.

It belongs to the glycosyltransferase 41 family. O-GlcNAc transferase subfamily. In terms of assembly, monomer; may exist in different oligomerization states in cells. Homotrimer, oligomerizes via TPR repeats 6 and 7. Trimerization is not necessary for activity in vitro, however it increases affinity for UDP-GlcNAc. Component of a THAP1/THAP3-HCFC1-OGT complex. Component of the NSL complex at least composed of MOF/KAT8, KANSL1, KANSL2, KANSL3, MCRS1, PHF20, OGT1/OGT, WDR5 and HCFC1. Found in a complex with KIF5B, RHOT1, RHOT2 and TRAK1. Found in a complex composed of at least SINHCAF, SIN3A, HDAC1, SAP30, RBBP4, OGT and TET1. Component of a complex composed of KMT2E/MLL5 (isoform 3), OGT (isoform 1) and USP7; the complex stabilizes KMT2E/MLL5, preventing KMT2E/MLL5 ubiquitination and proteasomal-mediated degradation. Interacts (via TPRs 1-6) with SIN3A; the interaction mediates transcriptional repression in parallel with histone deacetylase. Interacts (via TPR 5-6) with TET1, TET2 and TET3. Interacts (via TPR repeats 6 and 7) with ATXN10. Interacts with NSD2. Interacts with PROSER1; this interaction mediates TET2 O-GlcNAcylation and stability by promoting the interaction between OGT and TET2. Interacts with USP7. As to quaternary structure, (Microbial infection) Interacts with human T-cell leukemia virus 1/HTLV-1 protein Tax; this interaction increases Tax interacting partner CREB1 O-GlcNAcylation. Post-translationally, ubiquitinated by the SCF(FBXO31) complex, leading to its proteasomal degradation. Phosphorylation on Ser-3 or Ser-4 by GSK3-beta positively regulates its activity. Phosphorylation at Thr-454 by AMPK promotes nuclear localization. In terms of processing, glycosylated via autocatalysis; O-GlcNAcylation at Ser-399 promotes nuclear localization. Post-translationally, glycosylated via autocatalysis; does not affect the enzyme activity but regulates substrate selectivity. As to expression, highly expressed in pancreas and to a lesser extent in skeletal muscle, heart, brain and placenta. Present in trace amounts in lung and liver.

The protein resides in the nucleus. Its subcellular location is the cytoplasm. It localises to the mitochondrion. The protein localises to the membrane. It is found in the cell membrane. The protein resides in the mitochondrion membrane. Its subcellular location is the cell projection. It carries out the reaction L-seryl-[protein] + UDP-N-acetyl-alpha-D-glucosamine = 3-O-(N-acetyl-beta-D-glucosaminyl)-L-seryl-[protein] + UDP + H(+). The catalysed reaction is L-threonyl-[protein] + UDP-N-acetyl-alpha-D-glucosamine = 3-O-(N-acetyl-beta-D-glucosaminyl)-L-threonyl-[protein] + UDP + H(+). The protein operates within protein modification; protein glycosylation. Its activity is regulated as follows. Subject to product inhibition by UDP. In terms of biological role, catalyzes the transfer of a single N-acetylglucosamine from UDP-GlcNAc to a serine or threonine residue in cytoplasmic and nuclear proteins resulting in their modification with a beta-linked N-acetylglucosamine (O-GlcNAc). Glycosylates a large and diverse number of proteins including histone H2B, AKT1, AMPK, ATG4B, CAPRIN1, EZH2, FNIP1, GSDMD, KRT7, LMNA, LMNB1, LMNB2, RPTOR, HOXA1, PFKL, KMT2E/MLL5, MAPT/TAU, TET2, RBL2, RET, NOD2 and HCFC1. Can regulate their cellular processes via cross-talk between glycosylation and phosphorylation or by affecting proteolytic processing. Involved in insulin resistance in muscle and adipocyte cells via glycosylating insulin signaling components and inhibiting the 'Thr-308' phosphorylation of AKT1, enhancing IRS1 phosphorylation and attenuating insulin signaling. Involved in glycolysis regulation by mediating glycosylation of 6-phosphofructokinase PFKL, inhibiting its activity. Plays a key role in chromatin structure by mediating O-GlcNAcylation of 'Ser-112' of histone H2B: recruited to CpG-rich transcription start sites of active genes via its interaction with TET proteins (TET1, TET2 or TET3). As part of the NSL complex indirectly involved in acetylation of nucleosomal histone H4 on several lysine residues. O-GlcNAcylation of 'Ser-75' of EZH2 increases its stability, and facilitating the formation of H3K27me3 by the PRC2/EED-EZH2 complex. Stabilizes KMT2E/MLL5 by mediating its glycosylation, thereby preventing KMT2E/MLL5 ubiquitination. Regulates circadian oscillation of the clock genes and glucose homeostasis in the liver. Stabilizes clock proteins BMAL1 and CLOCK through O-glycosylation, which prevents their ubiquitination and subsequent degradation. Promotes the CLOCK-BMAL1-mediated transcription of genes in the negative loop of the circadian clock such as PER1/2 and CRY1/2. O-glycosylates HCFC1 and regulates its proteolytic processing and transcriptional activity. Component of a THAP1/THAP3-HCFC1-OGT complex that is required for the regulation of the transcriptional activity of RRM1. Regulates mitochondrial motility in neurons by mediating glycosylation of TRAK1. Promotes autophagy by mediating O-glycosylation of ATG4B. Acts as a regulator of mTORC1 signaling by mediating O-glycosylation of RPTOR and FNIP1: O-GlcNAcylation of RPTOR in response to glucose sufficiency promotes activation of the mTORC1 complex. Functionally, the mitochondrial isoform (mOGT) is cytotoxic and triggers apoptosis in several cell types including INS1, an insulinoma cell line. Has N-acetylglucosaminyltransferase activity: glycosylates proteins, such as HNRNPU, NEUROD1, NUP62 and PDCD6IP. Displays specific substrate selectivity compared to other isoforms. This Homo sapiens (Human) protein is UDP-N-acetylglucosamine--peptide N-acetylglucosaminyltransferase 110 kDa subunit.